The sequence spans 228 residues: Prophenin-2 (228 aa).

The N-terminal stretch at 1–29 (METQRASLCLGRWSLWLLLLALVVPSASA) is a signal peptide. Residues 30–146 (QALSYREAVL…FLRRPRLRRQ (117 aa)) constitute a propeptide that is removed on maturation. 2 disulfide bridges follow: C85/C96 and C107/C124. 7 repeat units span residues 148–157 (FPPPNVPGPR), 158–167 (FPPPNVPGPR), 168–177 (FPPPNFPGPR), 178–187 (FPPPNFPGPR), 188–197 (FPPPNFPGPP), 198–207 (FPPPIFPGPW), and 208–217 (FPPPPPFRPP). Positions 148 to 217 (FPPPNVPGPR…FPPPPPFRPP (70 aa)) are 7 X 10 AA tandem repeats. 2 disordered regions span residues 167–195 (RFPP…NFPG) and 207–228 (WFPP…PGRR). The residue at position 225 (P225) is a Proline amide. A propeptide spans 226–228 (GRR) (removed in mature form).

This sequence belongs to the cathelicidin family.

Its subcellular location is the secreted. Its function is as follows. Exerts antimicrobial activity. It is more effective against Gram-negative bacteria than Gram-positive bacteria. The chain is Prophenin-2 from Sus scrofa (Pig).